The sequence spans 674 residues: DNA ligase (674 aa).

NAD(+) is bound by residues 31–35 (DYEYD), 80–81 (SL), and E110. K112 (N6-AMP-lysine intermediate) is an active-site residue. NAD(+)-binding residues include R133, E167, K283, and K307. Zn(2+) contacts are provided by C401, C404, C419, and C424. The region spanning 584 to 673 (KVEKIFEGMK…SKDEVKAVLE (90 aa)) is the BRCT domain.

It belongs to the NAD-dependent DNA ligase family. LigA subfamily. The cofactor is Mg(2+). Mn(2+) is required as a cofactor.

It carries out the reaction NAD(+) + (deoxyribonucleotide)n-3'-hydroxyl + 5'-phospho-(deoxyribonucleotide)m = (deoxyribonucleotide)n+m + AMP + beta-nicotinamide D-nucleotide.. Functionally, DNA ligase that catalyzes the formation of phosphodiester linkages between 5'-phosphoryl and 3'-hydroxyl groups in double-stranded DNA using NAD as a coenzyme and as the energy source for the reaction. It is essential for DNA replication and repair of damaged DNA. The chain is DNA ligase from Clostridioides difficile (strain 630) (Peptoclostridium difficile).